We begin with the raw amino-acid sequence, 20 residues long: KVYSRXELAKVLQDFGREAY.

The protein belongs to the glycosyl hydrolase 22 family.

In terms of biological role, sperm surface membrane protein that may be involved in sperm-egg plasma membrane adhesion and fusion during fertilization. It could be a potential receptor for the egg oligosaccharide residue N-acetylglucosamine, which is present in the extracellular matrix over the egg plasma membrane. In Vulpes vulpes (Red fox), this protein is Sperm acrosome membrane-associated protein 3, processed form (SPACA3).